A 300-amino-acid chain; its full sequence is NAD kinase (300 aa).

The active-site Proton acceptor is Asp75. NAD(+)-binding positions include Asp75 to Gly76, Asn149 to Asp150, Arg177, Asp179, Thr190 to Ser195, Ala214, and Gln248.

This sequence belongs to the NAD kinase family. Requires a divalent metal cation as cofactor.

The protein localises to the cytoplasm. The enzyme catalyses NAD(+) + ATP = ADP + NADP(+) + H(+). Functionally, involved in the regulation of the intracellular balance of NAD and NADP, and is a key enzyme in the biosynthesis of NADP. Catalyzes specifically the phosphorylation on 2'-hydroxyl of the adenosine moiety of NAD to yield NADP. This is NAD kinase from Burkholderia cenocepacia (strain HI2424).